A 198-amino-acid chain; its full sequence is Large ribosomal subunit protein bL21 (198 aa).

Belongs to the bacterial ribosomal protein bL21 family. Part of the 50S ribosomal subunit. Contacts protein L20.

In terms of biological role, this protein binds to 23S rRNA in the presence of protein L20. This chain is Large ribosomal subunit protein bL21, found in Ruegeria sp. (strain TM1040) (Silicibacter sp.).